Consider the following 238-residue polypeptide: MGIDELYKKEFGIVAGVDEAGRGCLAGPVVAAAVVLEKEIEGINDSKQLSPAKRERLFDEIMGKAAVGIGIASPEEIDLHNIFNATKLAMNRALENLSVGPSFVLVDGKGIELRVPGTCLVKGDQKSKLIGAASIVAKVFRDRLMSEFHKMYPQFSFHKHKGYATKEHLNEIRKNGVLPIHRMSFEPVLELLTDDLLREFFEKGLISENRFEHIKNLLEAKKSVVFRKERTDHNLPLF.

The RNase H type-2 domain maps to 12-197 (GIVAGVDEAG…VLELLTDDLL (186 aa)). Aspartate 18, glutamate 19, and aspartate 107 together coordinate a divalent metal cation.

This sequence belongs to the RNase HII family. Requires Mn(2+) as cofactor. It depends on Mg(2+) as a cofactor.

It localises to the cytoplasm. It catalyses the reaction Endonucleolytic cleavage to 5'-phosphomonoester.. Its function is as follows. Endonuclease that specifically degrades the RNA of RNA-DNA hybrids. The protein is Ribonuclease HII of Thermotoga petrophila (strain ATCC BAA-488 / DSM 13995 / JCM 10881 / RKU-1).